Here is a 101-residue protein sequence, read N- to C-terminus: Putative pterin-4-alpha-carbinolamine dehydratase (101 aa).

The protein belongs to the pterin-4-alpha-carbinolamine dehydratase family.

The catalysed reaction is (4aS,6R)-4a-hydroxy-L-erythro-5,6,7,8-tetrahydrobiopterin = (6R)-L-erythro-6,7-dihydrobiopterin + H2O. The chain is Putative pterin-4-alpha-carbinolamine dehydratase from Nitrobacter winogradskyi (strain ATCC 25391 / DSM 10237 / CIP 104748 / NCIMB 11846 / Nb-255).